A 99-amino-acid chain; its full sequence is NADH-quinone oxidoreductase subunit K (99 aa).

3 helical membrane-spanning segments follow: residues 2 to 22 (PVEY…LGVL), 28 to 48 (LILM…FLAF), and 60 to 80 (IAFF…AVVI).

Belongs to the complex I subunit 4L family. As to quaternary structure, NDH-1 is composed of 14 different subunits. Subunits NuoA, H, J, K, L, M, N constitute the membrane sector of the complex.

The protein resides in the cell inner membrane. It catalyses the reaction a quinone + NADH + 5 H(+)(in) = a quinol + NAD(+) + 4 H(+)(out). Functionally, NDH-1 shuttles electrons from NADH, via FMN and iron-sulfur (Fe-S) centers, to quinones in the respiratory chain. The immediate electron acceptor for the enzyme in this species is believed to be ubiquinone. Couples the redox reaction to proton translocation (for every two electrons transferred, four hydrogen ions are translocated across the cytoplasmic membrane), and thus conserves the redox energy in a proton gradient. The sequence is that of NADH-quinone oxidoreductase subunit K from Anaeromyxobacter dehalogenans (strain 2CP-C).